A 285-amino-acid polypeptide reads, in one-letter code: tRNA pseudouridine synthase B (285 aa).

D38 (nucleophile) is an active-site residue.

It belongs to the pseudouridine synthase TruB family. Type 1 subfamily.

It catalyses the reaction uridine(55) in tRNA = pseudouridine(55) in tRNA. Responsible for synthesis of pseudouridine from uracil-55 in the psi GC loop of transfer RNAs. The sequence is that of tRNA pseudouridine synthase B from Geobacillus kaustophilus (strain HTA426).